The following is a 128-amino-acid chain: MTQTLIPLNFLAVAIGAALGACARWLAGLWLNSSAWPWGTLLVNLAGGYLIGLALAVLLAHPEWPQWIRLAAVTGFLGGLTTFSTFSAETVGMLERGAYATALGYAALSLVGSLALTALGLASAHALR.

4 helical membrane passes run 10–30 (FLAV…AGLW), 40–60 (TLLV…VLLA), 71–91 (AAVT…AETV), and 102–122 (ALGY…LGLA). Na(+) contacts are provided by G78 and T81.

The protein belongs to the fluoride channel Fluc/FEX (TC 1.A.43) family.

Its subcellular location is the cell inner membrane. It carries out the reaction fluoride(in) = fluoride(out). With respect to regulation, na(+) is not transported, but it plays an essential structural role and its presence is essential for fluoride channel function. In terms of biological role, fluoride-specific ion channel. Important for reducing fluoride concentration in the cell, thus reducing its toxicity. In Bordetella petrii (strain ATCC BAA-461 / DSM 12804 / CCUG 43448), this protein is Fluoride-specific ion channel FluC.